The following is a 139-amino-acid chain: Transcription antitermination protein NusB (139 aa).

The protein belongs to the NusB family.

In terms of biological role, involved in transcription antitermination. Required for transcription of ribosomal RNA (rRNA) genes. Binds specifically to the boxA antiterminator sequence of the ribosomal RNA (rrn) operons. The sequence is that of Transcription antitermination protein NusB from Limosilactobacillus fermentum (strain NBRC 3956 / LMG 18251) (Lactobacillus fermentum).